The sequence spans 373 residues: Ca(2+)/H(+) antiporter (373 aa).

A run of 11 helical transmembrane segments spans residues 6-26 (TIFF…WLHW), 29-49 (VSIF…MGEA), 61-81 (LGGL…AFIA), 94-114 (ITGS…LLGG), 134-154 (MNLA…SNGI), 162-182 (LSVA…LFSM), 220-240 (FWLG…ELLV), 249-269 (SLGL…GNAA), 291-311 (VGST…AGWI), 318-338 (LDFN…ANSI), and 349-369 (GSLL…HPVV).

It belongs to the Ca(2+):cation antiporter (CaCA) (TC 2.A.19) family. Cation/proton exchanger (CAX) subfamily.

The protein resides in the cell inner membrane. Ca(+)/H(+) antiporter that extrudes calcium in exchange for external protons. Plays an important role in salt tolerance. Does not transport sodium or lithium. The polypeptide is Ca(2+)/H(+) antiporter (Aphanothece halophytica).